The chain runs to 795 residues: Mitochondrial intermediate peptidase (795 aa).

The transit peptide at 1–22 directs the protein to the mitochondrion; it reads MLKTLNRRSWTCRQCIRILRRN. Residue His-561 coordinates Zn(2+). Glu-562 is an active-site residue. Residues His-565 and His-568 each contribute to the Zn(2+) site.

The protein belongs to the peptidase M3 family. Zn(2+) serves as cofactor.

It is found in the mitochondrion matrix. It catalyses the reaction Release of an N-terminal octapeptide as second stage of processing of some proteins imported into the mitochondrion.. Its function is as follows. Cleaves proteins, imported into the mitochondrion, to their mature size. While most mitochondrial precursor proteins are processed to the mature form in one step by mitochondrial processing peptidase (MPP), the sequential cleavage by MIP of an octapeptide after initial processing by MPP is a required step for a subgroup of nuclear-encoded precursor proteins destined for the matrix or the inner membrane. This Coccidioides immitis (strain RS) (Valley fever fungus) protein is Mitochondrial intermediate peptidase (OCT1).